The following is a 411-amino-acid chain: Putative acid phosphatase 10 (411 aa).

The Nucleophile role is filled by His33. The active-site Proton donor is the Asp313. Cys379 and Cys385 form a disulfide bridge.

Belongs to the histidine acid phosphatase family.

It catalyses the reaction a phosphate monoester + H2O = an alcohol + phosphate. The protein is Putative acid phosphatase 10 (pho-10) of Caenorhabditis elegans.